The primary structure comprises 497 residues: ATP synthase subunit alpha 2 (497 aa).

An ATP-binding site is contributed by 167 to 174; sequence GERATGKT.

It belongs to the ATPase alpha/beta chains family. In terms of assembly, F-type ATPases have 2 components, CF(1) - the catalytic core - and CF(0) - the membrane proton channel. CF(1) has five subunits: alpha(3), beta(3), gamma(1), delta(1), epsilon(1). CF(0) has four main subunits: a(1), b(1), b'(1) and c(9-12).

The protein resides in the cell inner membrane. It catalyses the reaction ATP + H2O + 4 H(+)(in) = ADP + phosphate + 5 H(+)(out). Functionally, produces ATP from ADP in the presence of a proton gradient across the membrane. The alpha chain is a regulatory subunit. The sequence is that of ATP synthase subunit alpha 2 from Cereibacter sphaeroides (strain ATCC 17029 / ATH 2.4.9) (Rhodobacter sphaeroides).